The following is a 529-amino-acid chain: Bifunctional purine biosynthesis protein PurH (529 aa).

Residues 1-148 enclose the MGS-like domain; it reads MQQRRPVRRA…KNHKDVAIVV (148 aa). K287 is subject to N6-acetyllysine.

The protein belongs to the PurH family.

The enzyme catalyses (6R)-10-formyltetrahydrofolate + 5-amino-1-(5-phospho-beta-D-ribosyl)imidazole-4-carboxamide = 5-formamido-1-(5-phospho-D-ribosyl)imidazole-4-carboxamide + (6S)-5,6,7,8-tetrahydrofolate. It catalyses the reaction IMP + H2O = 5-formamido-1-(5-phospho-D-ribosyl)imidazole-4-carboxamide. Its pathway is purine metabolism; IMP biosynthesis via de novo pathway; 5-formamido-1-(5-phospho-D-ribosyl)imidazole-4-carboxamide from 5-amino-1-(5-phospho-D-ribosyl)imidazole-4-carboxamide (10-formyl THF route): step 1/1. It participates in purine metabolism; IMP biosynthesis via de novo pathway; IMP from 5-formamido-1-(5-phospho-D-ribosyl)imidazole-4-carboxamide: step 1/1. The protein is Bifunctional purine biosynthesis protein PurH of Escherichia coli O17:K52:H18 (strain UMN026 / ExPEC).